The chain runs to 361 residues: Chorismate synthase (361 aa).

Arg48 lines the NADP(+) pocket. FMN is bound by residues 125 to 127 (RSS), 238 to 239 (NA), Gly278, 293 to 297 (KPTSS), and Arg319.

Belongs to the chorismate synthase family. As to quaternary structure, homotetramer. FMNH2 is required as a cofactor.

The enzyme catalyses 5-O-(1-carboxyvinyl)-3-phosphoshikimate = chorismate + phosphate. The protein operates within metabolic intermediate biosynthesis; chorismate biosynthesis; chorismate from D-erythrose 4-phosphate and phosphoenolpyruvate: step 7/7. Its function is as follows. Catalyzes the anti-1,4-elimination of the C-3 phosphate and the C-6 proR hydrogen from 5-enolpyruvylshikimate-3-phosphate (EPSP) to yield chorismate, which is the branch point compound that serves as the starting substrate for the three terminal pathways of aromatic amino acid biosynthesis. This reaction introduces a second double bond into the aromatic ring system. The protein is Chorismate synthase of Vibrio anguillarum (strain ATCC 68554 / 775) (Listonella anguillarum).